The primary structure comprises 257 residues: UPF0246 protein swp_3736 (257 aa).

It belongs to the UPF0246 family.

The polypeptide is UPF0246 protein swp_3736 (Shewanella piezotolerans (strain WP3 / JCM 13877)).